We begin with the raw amino-acid sequence, 365 residues long: Cobalt-precorrin-5B C(1)-methyltransferase (365 aa).

This sequence belongs to the CbiD family.

It catalyses the reaction Co-precorrin-5B + S-adenosyl-L-methionine = Co-precorrin-6A + S-adenosyl-L-homocysteine. The protein operates within cofactor biosynthesis; adenosylcobalamin biosynthesis; cob(II)yrinate a,c-diamide from sirohydrochlorin (anaerobic route): step 6/10. Functionally, catalyzes the methylation of C-1 in cobalt-precorrin-5B to form cobalt-precorrin-6A. The sequence is that of Cobalt-precorrin-5B C(1)-methyltransferase from Methanococcus maripaludis (strain C5 / ATCC BAA-1333).